A 316-amino-acid chain; its full sequence is L-lactate dehydrogenase (316 aa).

NAD(+)-binding positions include 13–15 (GMI), 34–36 (FDI), tyrosine 67, and 79–83 (TAGFT). Arginine 95 is a binding site for substrate. NAD(+)-binding positions include 125–127 (VTN), leucine 150, and leucine 154. Substrate-binding residues include arginine 158 and histidine 182. Residue histidine 182 participates in NAD(+) binding. Catalysis depends on histidine 182, which acts as the Proton acceptor.

It belongs to the LDH/MDH superfamily. LDH family. Homotetramer.

It catalyses the reaction (S)-lactate + NAD(+) = pyruvate + NADH + H(+). It participates in fermentation; pyruvate fermentation to lactate; (S)-lactate from pyruvate: step 1/1. The polypeptide is L-lactate dehydrogenase (Plasmodium berghei).